We begin with the raw amino-acid sequence, 184 residues long: Lactoylglutathione lyase (184 aa).

N-acetylalanine is present on Ala2. An intrachain disulfide couples Cys19 to Cys20. The 147-residue stretch at 31-177 folds into the VOC domain; sequence LLQQTMLRVK…DGYWIEILNP (147 aa). Substrate is bound by residues Gln34 and Arg38. Gln34 serves as a coordination point for Zn(2+). A disulfide bond links Cys61 and Cys139. Lys88 is subject to N6-succinyllysine. Zn(2+) is bound at residue Glu100. Asn104 lines the substrate pocket. Thr107 carries the post-translational modification Phosphothreonine. Substrate contacts are provided by Arg123 and His127. Zn(2+) is bound at residue His127. Cys139 is subject to S-glutathionyl cysteine; alternate. Residue Lys148 is modified to N6-acetyllysine; alternate. Position 148 is an N6-succinyllysine; alternate (Lys148). Substrate is bound at residue 157-158; sequence KM. Glu173 contacts Zn(2+). The active-site Proton donor/acceptor is Glu173.

It belongs to the glyoxalase I family. As to quaternary structure, homodimer. It depends on Zn(2+) as a cofactor. In terms of processing, glutathionylation at Cys-139 inhibits enzyme activity. Phosphorylated at Thr-107 in the presence of CaMK2. However, this is a consensus site for phosphorylation by CK2 so phosphorylation may be mediated by CK2 rather than CaMK2. Phosphorylation is induced by TNF and suppresses the TNF-induced transcriptional activity of NF-kappa-B. Post-translationally, exists in a nitric oxide (NO)-modified form. The exact nature of the modification is unknown, but it suppresses the TNF-induced transcriptional activity of NF-kappa-B.

It carries out the reaction (R)-S-lactoylglutathione = methylglyoxal + glutathione. Its pathway is secondary metabolite metabolism; methylglyoxal degradation; (R)-lactate from methylglyoxal: step 1/2. With respect to regulation, regulated by oxidation of Cys-139 in response to the redox state of the cell. Results in the alternative formation of cystine or glutathione-bound cysteine, the latter modification leading to reduced enzyme activity. Catalyzes the conversion of hemimercaptal, formed from methylglyoxal and glutathione, to S-lactoylglutathione. Involved in the regulation of TNF-induced transcriptional activity of NF-kappa-B. Required for normal osteoclastogenesis. This Homo sapiens (Human) protein is Lactoylglutathione lyase (GLO1).